The following is a 786-amino-acid chain: Progesterone receptor (786 aa).

Positions 1-10 are enriched in basic and acidic residues; sequence MTEVKSKETR. Disordered regions lie at residues 1 to 95, 110 to 212, and 252 to 279; these read MTEV…SKDC, AAPW…ASPA, and SAFG…DGKE. Positions 1 to 420 are modulating, Pro-Rich; it reads MTEVKSKETR…YSFESLPQKI (420 aa). A Glycyl lysine isopeptide (Lys-Gly) (interchain with G-Cter in SUMO) cross-link involves residue lysine 7. Acidic residues predominate over residues 48-79; it reads DEEEEEEENEEEEEEEEPQQREEEEEEEEEDR. The span at 143–154 shows a compositional bias: pro residues; the sequence is APGPSQPRPGAP. Residues 186–197 show a composition bias toward basic and acidic residues; sequence AEERGFPERDAG. Positions 203–212 are enriched in low complexity; the sequence is LAPAAAASPA. Phosphoserine occurs at positions 210 and 259. A Glycyl lysine isopeptide (Lys-Gly) (interchain with G-Cter in SUMO); alternate cross-link involves residue lysine 294. Lysine 294 participates in a covalent cross-link: Glycyl lysine isopeptide (Lys-Gly) (interchain with G-Cter in ubiquitin); alternate. Lysine 385 participates in a covalent cross-link: Glycyl lysine isopeptide (Lys-Gly) (interchain with G-Cter in SUMO). 2 consecutive NR C4-type zinc fingers follow at residues 421 to 441 and 457 to 481; these read CLIC…CGSC and CAGR…LRKC. The nuclear receptor DNA-binding region spans 421-486; it reads CLICGDEASG…RLRKCCQAGM (66 aa). At serine 529 the chain carries Phosphoserine. An NR LBD domain is found at 532-766; that stretch reads QEIPFVPPMI…EFPEMMSEVI (235 aa).

Belongs to the nuclear hormone receptor family. NR3 subfamily. Phosphorylation of Ser-529 is sharply increased upon progesterone treatment, whereas phosphorylation of Ser-210 and Ser-259 is modestly induced by progesterone. In terms of processing, ubiquitinated. Ubiquitination is increased by progesterone and represses sumoylation at the same site. Post-translationally, sumoylation is hormone-dependent and represses transcriptional activity. Sumoylation on all three sites is enhanced by PIAS3. Desumoylated by SENP1. Sumoylation on Lys-385, the main site of sumoylation, is repressed by ubiquitination on the same site. Oviduct and bursa of Fabricius.

It is found in the nucleus. The protein localises to the cytoplasm. Its function is as follows. The steroid hormones and their receptors are involved in the regulation of eukaryotic gene expression and affect cellular proliferation and differentiation in target tissues. The sequence is that of Progesterone receptor (PGR) from Gallus gallus (Chicken).